A 472-amino-acid polypeptide reads, in one-letter code: ATP synthase subunit beta (472 aa).

Residue 155–162 participates in ATP binding; the sequence is GGAGVGKT.

Belongs to the ATPase alpha/beta chains family. As to quaternary structure, F-type ATPases have 2 components, CF(1) - the catalytic core - and CF(0) - the membrane proton channel. CF(1) has five subunits: alpha(3), beta(3), gamma(1), delta(1), epsilon(1). CF(0) has three main subunits: a(1), b(2) and c(9-12). The alpha and beta chains form an alternating ring which encloses part of the gamma chain. CF(1) is attached to CF(0) by a central stalk formed by the gamma and epsilon chains, while a peripheral stalk is formed by the delta and b chains.

The protein resides in the cell inner membrane. The catalysed reaction is ATP + H2O + 4 H(+)(in) = ADP + phosphate + 5 H(+)(out). In terms of biological role, produces ATP from ADP in the presence of a proton gradient across the membrane. The catalytic sites are hosted primarily by the beta subunits. The sequence is that of ATP synthase subunit beta from Fervidobacterium nodosum (strain ATCC 35602 / DSM 5306 / Rt17-B1).